A 1185-amino-acid chain; its full sequence is ELMO domain-containing protein F (1185 aa).

8 disordered regions span residues 88-133, 176-196, 361-409, 566-628, 642-805, 819-868, 883-989, and 1044-1114; these read QPSP…GNNN, ISTN…NTAE, NNNS…VENE, KSTD…NTKS, ETER…KSSG, LGEK…PYII, DLDF…TQVT, and QKQK…KPVL. 4 stretches are compositionally biased toward low complexity: residues 94–127, 176–194, 361–406, and 587–613; these read STIH…SSPI, ISTN…NNNT, NNNS…NNNV, and PQSQ…SSSS. The ELMO domain occupies 275–488; that stretch reads DRQNVLSFLN…KTRAVLSRIK (214 aa). Residues 648–665 are compositionally biased toward polar residues; that stretch reads SLTGSNGITDGGDSNPNS. Over residues 688–699 the composition is skewed to low complexity; it reads SENGSSSSFSFE. A compositionally biased stretch (polar residues) spans 721-732; it reads FNSLTGELTMNI. Composition is skewed to low complexity over residues 733 to 760 and 767 to 780; these read SSSS…PNVS and TTTT…TTTT. Polar residues predominate over residues 781–790; sequence DDQSQQQVPP. A compositionally biased stretch (basic residues) spans 829–841; sequence KVKSKKEKKKKSK. 4 stretches are compositionally biased toward low complexity: residues 853 to 864, 912 to 974, 1053 to 1072, and 1096 to 1109; these read NNSANNSSYNNS, SSSN…QQPQ, DENQ…SSNE, and GRNS…SSLS.

The polypeptide is ELMO domain-containing protein F (elmoF) (Dictyostelium discoideum (Social amoeba)).